Here is a 408-residue protein sequence, read N- to C-terminus: MRRFERKQNIFRNKDALGESYQPERIEERDEEIEEYMNALQPVIDGWEPNNIFLYGNTGVGKTAVTDYLLDRLQDDVAAYDDIDLSIISLNCKTLNSSYQVAVELVNELRPSGGEISTTGYPQQTVFKKLYQELEAIGGTILIVLDEVDSIGDRDELLYELPRARANGNLDSAKVGVIGISNDFKFRDQLDPRVQDTLCERELQFPPYDATELKNILESRVEVAVTDGSTDTGVLQLCAALAARDSGSARQALDLLRLGGEIAENREAEMIKEGHIEDARSQLEQERVEEGMRELTTHGRLALLAVISKAAKEETPCRTRDLYEEYRSLCESSETDALGQRSLHNHLSDLRMLGILSAHENRSGSRGNYYNYELDVPFTSAIEAMSDVLHLTTEIDTIRDIAAMNNVG.

Residues 60–64, Tyr208, and Arg220 contribute to the ATP site; that span reads VGKTA.

The protein belongs to the CDC6/cdc18 family.

Involved in regulation of DNA replication. The polypeptide is ORC1-type DNA replication protein 15 (cdc6o) (Haloarcula marismortui (strain ATCC 43049 / DSM 3752 / JCM 8966 / VKM B-1809) (Halobacterium marismortui)).